The chain runs to 340 residues: Large ribosomal subunit protein uL10 (340 aa).

A disordered region spans residues 305–340 (APQPAEEKVEEAEEEEEEEEEASEEEALAGLGALFG). Residues 312–331 (KVEEAEEEEEEEEEASEEEA) are compositionally biased toward acidic residues.

Belongs to the universal ribosomal protein uL10 family. Part of the 50S ribosomal subunit. Forms part of the ribosomal stalk which helps the ribosome interact with GTP-bound translation factors. Forms a heptameric L10(L12)2(L12)2(L12)2 complex, where L10 forms an elongated spine to which the L12 dimers bind in a sequential fashion.

Functionally, forms part of the ribosomal stalk, playing a central role in the interaction of the ribosome with GTP-bound translation factors. The chain is Large ribosomal subunit protein uL10 from Thermococcus gammatolerans (strain DSM 15229 / JCM 11827 / EJ3).